Here is a 340-residue protein sequence, read N- to C-terminus: DNA-directed RNA polymerase subunit alpha (340 aa).

The segment at 1-233 is alpha N-terminal domain (alpha-NTD); that stretch reads MIQDEIKVST…DLFIPLINSE (233 aa). An alpha C-terminal domain (alpha-CTD) region spans residues 265-340; it reads TKDVAFKHIF…IQLPKNKNYL (76 aa).

This sequence belongs to the RNA polymerase alpha chain family. In plastids the minimal PEP RNA polymerase catalytic core is composed of four subunits: alpha, beta, beta', and beta''. When a (nuclear-encoded) sigma factor is associated with the core the holoenzyme is formed, which can initiate transcription.

Its subcellular location is the plastid. It is found in the chloroplast. It carries out the reaction RNA(n) + a ribonucleoside 5'-triphosphate = RNA(n+1) + diphosphate. Its function is as follows. DNA-dependent RNA polymerase catalyzes the transcription of DNA into RNA using the four ribonucleoside triphosphates as substrates. This chain is DNA-directed RNA polymerase subunit alpha, found in Marchantia polymorpha (Common liverwort).